The sequence spans 174 residues: Large ribosomal subunit protein uL10 (174 aa).

It belongs to the universal ribosomal protein uL10 family. In terms of assembly, part of the ribosomal stalk of the 50S ribosomal subunit. The N-terminus interacts with L11 and the large rRNA to form the base of the stalk. The C-terminus forms an elongated spine to which L12 dimers bind in a sequential fashion forming a multimeric L10(L12)X complex.

Its function is as follows. Forms part of the ribosomal stalk, playing a central role in the interaction of the ribosome with GTP-bound translation factors. This chain is Large ribosomal subunit protein uL10, found in Syntrophus aciditrophicus (strain SB).